We begin with the raw amino-acid sequence, 118 residues long: Large ribosomal subunit protein uL18 (118 aa).

This sequence belongs to the universal ribosomal protein uL18 family. In terms of assembly, part of the 50S ribosomal subunit; part of the 5S rRNA/L5/L18/L25 subcomplex. Contacts the 5S and 23S rRNAs.

This is one of the proteins that bind and probably mediate the attachment of the 5S RNA into the large ribosomal subunit, where it forms part of the central protuberance. This Lactobacillus acidophilus (strain ATCC 700396 / NCK56 / N2 / NCFM) protein is Large ribosomal subunit protein uL18.